A 320-amino-acid chain; its full sequence is ATP-dependent 6-phosphofructokinase (320 aa).

Glycine 12 lines the ATP pocket. ADP-binding positions include 22 to 26 (RGVVR) and 55 to 60 (RYSVSD). ATP-binding positions include 73 to 74 (RF) and 103 to 106 (GDGS). Aspartate 104 contacts Mg(2+). 126-128 (TID) lines the substrate pocket. Catalysis depends on aspartate 128, which acts as the Proton acceptor. Arginine 155 contacts ADP. Residues arginine 163 and 170 to 172 (MGR) each bind substrate. ADP is bound by residues 186-188 (GCE), lysine 212, and 214-216 (KKH). Substrate-binding positions include glutamate 223, arginine 244, and 250-253 (HIQR).

This sequence belongs to the phosphofructokinase type A (PFKA) family. ATP-dependent PFK group I subfamily. Prokaryotic clade 'B1' sub-subfamily. In terms of assembly, homotetramer. It depends on Mg(2+) as a cofactor.

The protein localises to the cytoplasm. It carries out the reaction beta-D-fructose 6-phosphate + ATP = beta-D-fructose 1,6-bisphosphate + ADP + H(+). The protein operates within carbohydrate degradation; glycolysis; D-glyceraldehyde 3-phosphate and glycerone phosphate from D-glucose: step 3/4. With respect to regulation, allosterically activated by ADP and other diphosphonucleosides, and allosterically inhibited by phosphoenolpyruvate. Its function is as follows. Catalyzes the phosphorylation of D-fructose 6-phosphate to fructose 1,6-bisphosphate by ATP, the first committing step of glycolysis. The polypeptide is ATP-dependent 6-phosphofructokinase (Salmonella gallinarum (strain 287/91 / NCTC 13346)).